Reading from the N-terminus, the 603-residue chain is MKIQKGLFFLQRSIKNVLRKIIKFIKGYVKDIIKEINVKSLKKYKYNLFFEFIGSFLFVFFISIYMLNSNSNEEYIIKHTKQINPYKTNDILIPGHNNFEAEINNIKYMNNLNQERKNVVASILLEKYDNEYKGNNKSKREVERDDDKISNNLQNEFEKDNEKKKNYDNINEKEISTTSDGKIKDMEDPKNISNKNENYDNTNMELKNEKINNKVNDEKNIKNEDDINNKENMLKSVDKIIFKEPVNEYSKIKIEDINNINLKDIDQYEVLKNSENKKSSNHAIYSFVGCFIYVIFILLGAHINPAYTYALWLTEPKKYGFALSTLYITFQYFGGIVASIICAHLYGSIFIYTLLPKKEIIKTFLCEFISTFLITLLLLSLYNYKKKFMEENKNDESLTFNINKLRNMSSLYNFNTYEDFYSYDMFSTNQNRKYNSFLYIDNKYIKYIMNHIFYLLFIFFSLLFFVFVTNTTLNPMFSTSTLYTYLYYKIFKASNSFKIYSIFISFLSITKIFQLLIFYIQSLPLWIGPYFGSAFAATFLSLFKENEEEIINIIDTNVYSSYNKKKEQIPLIDKNSAKQNAYLIEYNDNIHNNSYNYLLPSVF.

A helical membrane pass occupies residues 40-70 (SLKKYKYNLFFEFIGSFLFVFFISIYMLNSN). Basic and acidic residues-rich tracts occupy residues 135 to 149 (NNKSKREVERDDDKI) and 156 to 190 (EFEKDNEKKKNYDNINEKEISTTSDGKIKDMEDPK). The segment at 135–200 (NNKSKREVER…NISNKNENYD (66 aa)) is disordered. Residues 191–200 (NISNKNENYD) show a composition bias toward polar residues. Transmembrane regions (helical) follow at residues 282 to 299 (HAIYSFVGCFIYVIFILL), 321 to 346 (FALSTLYITFQYFGGIVASIICAHLY), 360 to 393 (IIKTFLCEFISTFLITLLLLSLYNYKKKFMEENK), 442 to 471 (NKYIKYIMNHIFYLLFIFFSLLFFVFVTNT), and 509 to 542 (ITKIFQLLIFYIQSLPLWIGPYFGSAFAATFLSL).

It belongs to the MIP/aquaporin (TC 1.A.8) family.

The protein localises to the endomembrane system. The catalysed reaction is H2O(in) = H2O(out). It carries out the reaction glycerol(in) = glycerol(out). Functionally, required for sporozoite development in the mosquito vector. The sequence is that of Aquaporin-2 from Plasmodium falciparum (isolate NF54).